A 360-amino-acid chain; its full sequence is Phospho-N-acetylmuramoyl-pentapeptide-transferase (360 aa).

A run of 10 helical transmembrane segments spans residues R24–I44, G69–W89, W92–F112, M133–N153, I158–V178, G199–S219, V239–Y259, V263–I283, F288–V308, and Q337–L357.

Belongs to the glycosyltransferase 4 family. MraY subfamily. Mg(2+) is required as a cofactor.

It localises to the cell inner membrane. It catalyses the reaction UDP-N-acetyl-alpha-D-muramoyl-L-alanyl-gamma-D-glutamyl-meso-2,6-diaminopimeloyl-D-alanyl-D-alanine + di-trans,octa-cis-undecaprenyl phosphate = di-trans,octa-cis-undecaprenyl diphospho-N-acetyl-alpha-D-muramoyl-L-alanyl-D-glutamyl-meso-2,6-diaminopimeloyl-D-alanyl-D-alanine + UMP. It participates in cell wall biogenesis; peptidoglycan biosynthesis. In terms of biological role, catalyzes the initial step of the lipid cycle reactions in the biosynthesis of the cell wall peptidoglycan: transfers peptidoglycan precursor phospho-MurNAc-pentapeptide from UDP-MurNAc-pentapeptide onto the lipid carrier undecaprenyl phosphate, yielding undecaprenyl-pyrophosphoryl-MurNAc-pentapeptide, known as lipid I. This is Phospho-N-acetylmuramoyl-pentapeptide-transferase from Neisseria meningitidis serogroup C (strain 053442).